The sequence spans 273 residues: 3-methyl-2-oxobutanoate hydroxymethyltransferase (273 aa).

Mg(2+) contacts are provided by Asp53 and Asp92. 3-methyl-2-oxobutanoate is bound by residues 53 to 54, Asp92, and Lys120; that span reads DS. Glu122 provides a ligand contact to Mg(2+). Catalysis depends on Glu189, which acts as the Proton acceptor.

It belongs to the PanB family. As to quaternary structure, homodecamer; pentamer of dimers. Mg(2+) serves as cofactor.

The protein resides in the cytoplasm. It carries out the reaction 3-methyl-2-oxobutanoate + (6R)-5,10-methylene-5,6,7,8-tetrahydrofolate + H2O = 2-dehydropantoate + (6S)-5,6,7,8-tetrahydrofolate. Its pathway is cofactor biosynthesis; (R)-pantothenate biosynthesis; (R)-pantoate from 3-methyl-2-oxobutanoate: step 1/2. In terms of biological role, catalyzes the reversible reaction in which hydroxymethyl group from 5,10-methylenetetrahydrofolate is transferred onto alpha-ketoisovalerate to form ketopantoate. The sequence is that of 3-methyl-2-oxobutanoate hydroxymethyltransferase from Cupriavidus necator (strain ATCC 17699 / DSM 428 / KCTC 22496 / NCIMB 10442 / H16 / Stanier 337) (Ralstonia eutropha).